Here is a 493-residue protein sequence, read N- to C-terminus: Leucine-rich repeat-containing protein 14 (493 aa).

The stretch at 111-146 (KHTLRVLDMTGLLDDGVEQDPGTMSMWDCTAAVART) is one LRR 1; degenerate repeat. One copy of the LRR 2; degenerate repeat lies at 194 to 218 (RLCCRDLRAEDLPMRNTVALLQLLD). An LRR 3; degenerate repeat occupies 219–246 (AGCLRRVDLRFNNLGLRGLSVIIPHVAR). The LRR 4; degenerate repeat unit spans residues 247 to 282 (FQHLASLRLHYVHGDSRQPSVDGEDNFRYFLAQMGR). LRR repeat units follow at residues 283 to 307 (FTCL…LSTL), 308 to 339 (QSPL…VHLK), 340 to 360 (KLDL…QGLL), 364 to 391 (AATL…VLTR), and 392 to 416 (CASL…LLRD).

It belongs to the PRAME family. LRRC14 subfamily. As to quaternary structure, interacts with IKBKB; disrupts IKBKB-IKBKG interaction preventing I-kappa-B-kinase (IKK) core complex formation and leading to a decrease of IKBKB phosphorylation and NF-kappaB activation. Interacts with CHUK.

Its subcellular location is the cytoplasm. In terms of biological role, negatively regulates Toll-like receptor-mediated NF-kappa-B signaling by disrupting IKK core complex formation through interaction with IKBKB. In Bos taurus (Bovine), this protein is Leucine-rich repeat-containing protein 14.